We begin with the raw amino-acid sequence, 38 residues long: Photosystem II reaction center protein L (38 aa).

Residues 17–37 (SLFWGLLLIFVLAVLFSSYFF) traverse the membrane as a helical segment.

It belongs to the PsbL family. As to quaternary structure, PSII is composed of 1 copy each of membrane proteins PsbA, PsbB, PsbC, PsbD, PsbE, PsbF, PsbH, PsbI, PsbJ, PsbK, PsbL, PsbM, PsbT, PsbX, PsbY, PsbZ, Psb30/Ycf12, at least 3 peripheral proteins of the oxygen-evolving complex and a large number of cofactors. It forms dimeric complexes.

It is found in the plastid. The protein localises to the chloroplast thylakoid membrane. Functionally, one of the components of the core complex of photosystem II (PSII). PSII is a light-driven water:plastoquinone oxidoreductase that uses light energy to abstract electrons from H(2)O, generating O(2) and a proton gradient subsequently used for ATP formation. It consists of a core antenna complex that captures photons, and an electron transfer chain that converts photonic excitation into a charge separation. This subunit is found at the monomer-monomer interface and is required for correct PSII assembly and/or dimerization. The sequence is that of Photosystem II reaction center protein L from Porphyra purpurea (Red seaweed).